The following is a 147-amino-acid chain: Large ribosomal subunit protein uL16 (147 aa).

It belongs to the universal ribosomal protein uL16 family. In terms of assembly, part of the 50S ribosomal subunit.

Functionally, binds 23S rRNA and is also seen to make contacts with the A and possibly P site tRNAs. The sequence is that of Large ribosomal subunit protein uL16 from Finegoldia magna (strain ATCC 29328 / DSM 20472 / WAL 2508) (Peptostreptococcus magnus).